The primary structure comprises 105 residues: Small ribosomal subunit protein uS10 (105 aa).

It belongs to the universal ribosomal protein uS10 family. In terms of assembly, part of the 30S ribosomal subunit.

Its function is as follows. Involved in the binding of tRNA to the ribosomes. In Cyanothece sp. (strain PCC 7425 / ATCC 29141), this protein is Small ribosomal subunit protein uS10.